Here is a 1363-residue protein sequence, read N- to C-terminus: Spike glycoprotein (1363 aa).

The N-terminal stretch at 1-13 (MFLILLISLPTAF) is a signal peptide. The Extracellular portion of the chain corresponds to 14–1307 (AVIGDLKCTT…GTYEYYVKWP (1294 aa)). The 284-residue stretch at 15-298 (VIGDLKCTTV…DFMSEIKCKT (284 aa)) folds into the BetaCoV S1-NTD domain. 5 cysteine pairs are disulfide-bonded: Cys-21/Cys-165, Cys-160/Cys-193, Cys-172/Cys-252, Cys-286/Cys-296, and Cys-331/Cys-356. 2 N-linked (GlcNAc...) asparagine; by host glycosylation sites follow: Asn-59 and Asn-133. The N-linked (GlcNAc...) asparagine; by host glycan is linked to Asn-198. Residues 329–617 (PDCNIEAWLN…DVNSGTTCST (289 aa)) form the BetaCoV S1-CTD domain. Residue Asn-359 is glycosylated (N-linked (GlcNAc...) asparagine; by host). 2 cysteine pairs are disulfide-bonded: Cys-374–Cys-427 and Cys-386–Cys-615. N-linked (GlcNAc...) asparagine; by host glycans are attached at residues Asn-437, Asn-649, Asn-676, Asn-696, Asn-714, Asn-739, and Asn-788. 2 fusion peptide regions span residues 914–935 (SAIE…VEAY) and 933–953 (EAYN…VQSY). Asn-937 is a glycosylation site (N-linked (GlcNAc...) asparagine; by host). An intrachain disulfide couples Cys-938 to Cys-949. The segment at 1014 to 1064 (QKLIANAFNNALGAIQEGFDATNSALVKIQAVVNANAEALNNLLQQLSNRF) is heptad repeat 1. A coiled-coil region spans residues 1043–1087 (QAVVNANAEALNNLLQQLSNRFGAISSSLQEILSRLDALEAQAQI). 6 N-linked (GlcNAc...) asparagine; by host glycosylation sites follow: Asn-1194, Asn-1224, Asn-1234, Asn-1253, Asn-1267, and Asn-1288. The interval 1258–1296 (APDLSLDYINVTFLDLQDEMNRLQEAIKVLNQSYINLKD) is heptad repeat 2. The stretch at 1269-1297 (TFLDLQDEMNRLQEAIKVLNQSYINLKDI) forms a coiled coil. The helical transmembrane segment at 1308–1328 (WYVWLLIGFAGVAMLVLLFFI) threads the bilayer. At 1329 to 1363 (CCCTGCGTSCFKKCGGCCDDYTGHQELVIKTSHDD) the chain is on the cytoplasmic side. Positions 1359–1363 (TSHDD) match the KxHxx motif.

It belongs to the betacoronaviruses spike protein family. As to quaternary structure, homotrimer; each monomer consists of a S1 and a S2 subunit. The resulting peplomers protrude from the virus surface as spikes. Post-translationally, specific enzymatic cleavages in vivo yield mature proteins. The precursor is processed into S1 and S2 by host cell furin or another cellular protease to yield the mature S1 and S2 proteins. Additionally, a second cleavage leads to the release of a fusion peptide after viral attachment to host cell receptor. The cytoplasmic Cys-rich domain is palmitoylated. Spike glycoprotein is digested within host endosomes.

It localises to the virion membrane. Its subcellular location is the host endoplasmic reticulum-Golgi intermediate compartment membrane. It is found in the host cell membrane. Attaches the virion to the cell membrane by interacting with host receptor, initiating the infection. Functionally, mediates fusion of the virion and cellular membranes by acting as a class I viral fusion protein. Under the current model, the protein has at least three conformational states: pre-fusion native state, pre-hairpin intermediate state, and post-fusion hairpin state. During viral and target cell membrane fusion, the coiled coil regions (heptad repeats) assume a trimer-of-hairpins structure, positioning the fusion peptide in close proximity to the C-terminal region of the ectodomain. The formation of this structure appears to drive apposition and subsequent fusion of viral and target cell membranes. In terms of biological role, acts as a viral fusion peptide which is unmasked following S2 cleavage occurring upon virus endocytosis. This is Spike glycoprotein from Bos taurus (Bovine).